Here is a 401-residue protein sequence, read N- to C-terminus: Large ribosomal subunit protein uL4 (401 aa).

This sequence belongs to the universal ribosomal protein uL4 family.

The sequence is that of Large ribosomal subunit protein uL4 (RpL4) from Drosophila melanogaster (Fruit fly).